We begin with the raw amino-acid sequence, 154 residues long: MKTFSAKPAEVQKKWVVIDAKGLVVGRLATLVAMRLRGKHLPIYTPHVDCGDNVIIVNAKHAVFTGRKREQKTYYKHTGFVGHVKERTARQILEGRFPERVLEKAVERMIPRGPLGRVQMGNLRVYGGPDHPHEAQNPEKIDIAKLNRKNTRAA.

This sequence belongs to the universal ribosomal protein uL13 family. Part of the 50S ribosomal subunit.

Functionally, this protein is one of the early assembly proteins of the 50S ribosomal subunit, although it is not seen to bind rRNA by itself. It is important during the early stages of 50S assembly. The polypeptide is Large ribosomal subunit protein uL13 (Bradyrhizobium sp. (strain BTAi1 / ATCC BAA-1182)).